Consider the following 563-residue polypeptide: Methylcrotonoyl-CoA carboxylase beta chain, mitochondrial (563 aa).

The N-terminal 22 residues, 1–22, are a transit peptide targeting the mitochondrion; sequence MWAVLRLALRPCARASPAGPRA. Residues 49-306 form the CoA carboxyltransferase N-terminal domain; it reads MKALVNQLHE…QKKLDVTIEP (258 aa). A carboxyltransferase region spans residues 49-555; the sequence is MKALVNQLHE…SAALNAPIEK (507 aa). Lys70 is modified (N6-acetyllysine; alternate). An N6-succinyllysine; alternate modification is found at Lys70. Lys141 is modified (N6-succinyllysine). A CoA carboxyltransferase C-terminal domain is found at 309–555; it reads EPLFPADELY…SAALNAPIEK (247 aa). The segment at 343–372 is acyl-CoA binding; that stretch reads RFTEFKAFYGDTLVTGFARIFGYPVGIVGN. Lys495 is modified (N6-acetyllysine; alternate). The residue at position 495 (Lys495) is an N6-succinyllysine; alternate. Position 511 is an N6-acetyllysine (Lys511).

This sequence belongs to the AccD/PCCB family. In terms of assembly, probably a dodecamer composed of six biotin-containing alpha subunits (MCCC1) and six beta (MCCC2) subunits.

Its subcellular location is the mitochondrion matrix. The catalysed reaction is 3-methylbut-2-enoyl-CoA + hydrogencarbonate + ATP = 3-methyl-(2E)-glutaconyl-CoA + ADP + phosphate + H(+). It participates in amino-acid degradation; L-leucine degradation; (S)-3-hydroxy-3-methylglutaryl-CoA from 3-isovaleryl-CoA: step 2/3. In terms of biological role, carboxyltransferase subunit of the 3-methylcrotonyl-CoA carboxylase, an enzyme that catalyzes the conversion of 3-methylcrotonyl-CoA to 3-methylglutaconyl-CoA, a critical step for leucine and isovaleric acid catabolism. This is Methylcrotonoyl-CoA carboxylase beta chain, mitochondrial (MCCC2) from Homo sapiens (Human).